The sequence spans 364 residues: Phosphoserine aminotransferase (364 aa).

Arg-41 is a binding site for L-glutamate. Pyridoxal 5'-phosphate is bound by residues 75 to 76 (AS), Trp-100, Thr-155, Asp-175, and Gln-198. Lys-199 bears the N6-(pyridoxal phosphate)lysine mark. 239–240 (NT) is a pyridoxal 5'-phosphate binding site.

Belongs to the class-V pyridoxal-phosphate-dependent aminotransferase family. SerC subfamily. As to quaternary structure, homodimer. It depends on pyridoxal 5'-phosphate as a cofactor.

It localises to the cytoplasm. It catalyses the reaction O-phospho-L-serine + 2-oxoglutarate = 3-phosphooxypyruvate + L-glutamate. It carries out the reaction 4-(phosphooxy)-L-threonine + 2-oxoglutarate = (R)-3-hydroxy-2-oxo-4-phosphooxybutanoate + L-glutamate. The protein operates within amino-acid biosynthesis; L-serine biosynthesis; L-serine from 3-phospho-D-glycerate: step 2/3. Catalyzes the reversible conversion of 3-phosphohydroxypyruvate to phosphoserine and of 3-hydroxy-2-oxo-4-phosphonooxybutanoate to phosphohydroxythreonine. The polypeptide is Phosphoserine aminotransferase (Streptococcus uberis (strain ATCC BAA-854 / 0140J)).